The sequence spans 415 residues: Extracellular signal-regulated kinase 1 (415 aa).

Residues 66–369 (YQILEIVGEG…VEDALKHPYL (304 aa)) form the Protein kinase domain. Residues 72 to 80 (VGEGAYGIV) and lysine 95 contribute to the ATP site. Aspartate 190 acts as the Proton acceptor in catalysis. Residue threonine 226 is modified to Phosphothreonine. Positions 226–228 (TEY) match the TXY motif. Tyrosine 228 bears the Phosphotyrosine mark.

It belongs to the protein kinase superfamily. CMGC Ser/Thr protein kinase family. MAP kinase subfamily. Requires Mg(2+) as cofactor. In terms of processing, dually phosphorylated on Thr-226 and Tyr-228, which activates the enzyme.

It carries out the reaction L-seryl-[protein] + ATP = O-phospho-L-seryl-[protein] + ADP + H(+). The enzyme catalyses L-threonyl-[protein] + ATP = O-phospho-L-threonyl-[protein] + ADP + H(+). With respect to regulation, activated by tyrosine and threonine phosphorylation. The sequence is that of Extracellular signal-regulated kinase 1 (CEK1) from Candida albicans (strain WO-1) (Yeast).